A 403-amino-acid polypeptide reads, in one-letter code: CCA-adding enzyme (403 aa).

Residues Gly-32 and Arg-35 each contribute to the ATP site. Positions 32 and 35 each coordinate CTP. Mg(2+)-binding residues include Asp-45 and Asp-47. ATP-binding residues include Arg-116, Asp-159, Arg-162, Arg-165, and Arg-168. CTP-binding residues include Arg-116, Asp-159, Arg-162, Arg-165, and Arg-168.

The protein belongs to the tRNA nucleotidyltransferase/poly(A) polymerase family. Bacterial CCA-adding enzyme type 3 subfamily. As to quaternary structure, homodimer. The cofactor is Mg(2+).

It catalyses the reaction a tRNA precursor + 2 CTP + ATP = a tRNA with a 3' CCA end + 3 diphosphate. The catalysed reaction is a tRNA with a 3' CCA end + 2 CTP + ATP = a tRNA with a 3' CCACCA end + 3 diphosphate. Catalyzes the addition and repair of the essential 3'-terminal CCA sequence in tRNAs without using a nucleic acid template. Adds these three nucleotides in the order of C, C, and A to the tRNA nucleotide-73, using CTP and ATP as substrates and producing inorganic pyrophosphate. tRNA 3'-terminal CCA addition is required both for tRNA processing and repair. Also involved in tRNA surveillance by mediating tandem CCA addition to generate a CCACCA at the 3' terminus of unstable tRNAs. While stable tRNAs receive only 3'-terminal CCA, unstable tRNAs are marked with CCACCA and rapidly degraded. This is CCA-adding enzyme from Streptococcus uberis (strain ATCC BAA-854 / 0140J).